The primary structure comprises 2164 residues: Genome polyprotein (2164 aa).

The N-myristoyl glycine; by host moiety is linked to residue G2. Over 2 to 1477 (GAQVSRQNVG…DLGIANMTIG (1476 aa)) the chain is Cytoplasmic. The segment at 208–239 (NVSVGYNHTHPGEQGREVVPSRTSSDNKRPSD) is disordered. Positions 572-588 (LTQNPVENYIDSVLNEV) are amphipathic alpha-helix. Catalysis depends on for protease 2A activity residues H884 and D901. Positions 918 and 920 each coordinate Zn(2+). Catalysis depends on C972, which acts as the For protease 2A activity. Positions 978 and 980 each coordinate Zn(2+). A membrane-binding region spans residues 1104-1173 (SDSWLKKFTE…TIRLAPASVQ (70 aa)). The oligomerization stretch occupies residues 1104–1237 (SDSWLKKFTE…SPGTGKSLAT (134 aa)). The RNA-binding stretch occupies residues 1125–1129 (GQKIS). Residues 1197 to 1357 (EARRIKNLYI…KEYLLDGKLD (161 aa)) enclose the SF3 helicase domain. An ATP-binding site is contributed by 1227-1234 (GSPGTGKS). Zn(2+) contacts are provided by C1365, C1376, and C1381. The C4-type; degenerate zinc-finger motif lies at 1365–1381 (CDVNIKIGNAKCCPFIC). The segment at 1408-1415 (EDRRRSSA) is RNA-binding. Residues 1419–1424 (MEAIFQ) form an oligomerization region. Residues 1478-1493 (IIANVVSIVGVIYIIY) lie within the membrane without spanning it. The Cytoplasmic portion of the chain corresponds to 1494-2164 (KLFCTLQGPY…VLEHEWYEKF (671 aa)). Y1503 is modified (O-(5'-phospho-RNA)-tyrosine). Residues 1522–1700 (GPEEEFGRSL…FSAMLLKSYF (179 aa)) form the Peptidase C3 domain. Residues H1561, E1592, and C1668 each act as for protease 3C activity in the active site. In terms of domain architecture, RdRp catalytic spans 1932-2045 (ECLMAFDYSN…SYNFKLDMAV (114 aa)). Residues D1938 and D2031 each coordinate Mg(2+).

Belongs to the picornaviruses polyprotein family. In terms of assembly, interacts with capsid protein VP1 and capsid protein VP3 to form heterotrimeric protomers. As to quaternary structure, interacts with capsid protein VP0, and capsid protein VP3 to form heterotrimeric protomers. Five protomers subsequently associate to form pentamers which serve as building blocks for the capsid. Interacts with capsid protein VP2, capsid protein VP3 and capsid protein VP4 following cleavage of capsid protein VP0. Interacts with capsid protein VP1 and capsid protein VP3 in the mature capsid. In terms of assembly, interacts with capsid protein VP0 and capsid protein VP1 to form heterotrimeric protomers. Five protomers subsequently associate to form pentamers which serve as building blocks for the capsid. Interacts with capsid protein VP4 in the mature capsid. Interacts with protein 2C; this interaction may be important for virion morphogenesis. As to quaternary structure, interacts with capsid protein VP1 and capsid protein VP3. Homodimer. In terms of assembly, homohexamer; forms a hexameric ring structure with 6-fold symmetry characteristic of AAA+ ATPases. Interacts (via N-terminus) with host RTN3 (via reticulon domain); this interaction is important for viral replication. Interacts with capsid protein VP3; this interaction may be important for virion morphogenesis. As to quaternary structure, interacts with protein 3CD. Homodimer. Interacts with host GBF1. Interacts (via GOLD domain) with host ACBD3 (via GOLD domain); this interaction allows the formation of a viral protein 3A/ACBD3 heterotetramer with a 2:2 stoichiometry, which will stimulate the recruitment of host PI4KB in order to synthesize PI4P at the viral RNA replication sites. In terms of assembly, interacts with RNA-directed RNA polymerase. As to quaternary structure, interacts with protein 3AB and with RNA-directed RNA polymerase. Interacts with Viral protein genome-linked and with protein 3CD. The cofactor is Mg(2+). Post-translationally, specific enzymatic cleavages in vivo by the viral proteases yield processing intermediates and the mature proteins. Myristoylation is required for the formation of pentamers during virus assembly. Further assembly of 12 pentamers and a molecule of genomic RNA generates the provirion. In terms of processing, during virion maturation, immature virions are rendered infectious following cleavage of VP0 into VP4 and VP2. This maturation seems to be an autocatalytic event triggered by the presence of RNA in the capsid and it is followed by a conformational change infectious virion. Post-translationally, myristoylation is required during RNA encapsidation and formation of the mature virus particle. VPg is uridylylated by the polymerase into VPg-pUpU. This acts as a nucleotide-peptide primer for the genomic RNA replication.

It is found in the virion. It localises to the host cytoplasm. Its subcellular location is the host cytoplasmic vesicle membrane. The protein resides in the host nucleus. It carries out the reaction a ribonucleoside 5'-triphosphate + H2O = a ribonucleoside 5'-diphosphate + phosphate + H(+). It catalyses the reaction Selective cleavage of Tyr-|-Gly bond in the picornavirus polyprotein.. The enzyme catalyses RNA(n) + a ribonucleoside 5'-triphosphate = RNA(n+1) + diphosphate. The catalysed reaction is Selective cleavage of Gln-|-Gly bond in the poliovirus polyprotein. In other picornavirus reactions Glu may be substituted for Gln, and Ser or Thr for Gly.. With respect to regulation, replication or transcription is subject to high level of random mutations by the nucleotide analog ribavirin. In terms of biological role, forms an icosahedral capsid of pseudo T=3 symmetry with capsid proteins VP2 and VP3. The capsid is 300 Angstroms in diameter, composed of 60 copies of each capsid protein and enclosing the viral positive strand RNA genome. Capsid protein VP1 mainly forms the vertices of the capsid. Capsid protein VP1 interacts with host cell receptor to provide virion attachment to target host cells. This attachment induces virion internalization. Tyrosine kinases are probably involved in the entry process. After binding to its receptor, the capsid undergoes conformational changes. Capsid protein VP1 N-terminus (that contains an amphipathic alpha-helix) and capsid protein VP4 are externalized. Together, they shape a pore in the host membrane through which viral genome is translocated to host cell cytoplasm. Its function is as follows. Forms an icosahedral capsid of pseudo T=3 symmetry with capsid proteins VP2 and VP3. The capsid is 300 Angstroms in diameter, composed of 60 copies of each capsid protein and enclosing the viral positive strand RNA genome. Lies on the inner surface of the capsid shell. After binding to the host receptor, the capsid undergoes conformational changes. Capsid protein VP4 is released, Capsid protein VP1 N-terminus is externalized, and together, they shape a pore in the host membrane through which the viral genome is translocated into the host cell cytoplasm. Functionally, component of immature procapsids, which is cleaved into capsid proteins VP4 and VP2 after maturation. Allows the capsid to remain inactive before the maturation step. In terms of biological role, cysteine protease that cleaves viral polyprotein and specific host proteins. It is responsible for the autocatalytic cleavage between the P1 and P2 regions, which is the first cleavage occurring in the polyprotein. Also cleaves the host translation initiation factor EIF4G1, in order to shut down the capped cellular mRNA translation. Inhibits the host nucleus-cytoplasm protein and RNA trafficking by cleaving host members of the nuclear pores. Counteracts stress granule formation probably by antagonizing its assembly or promoting its dissassembly. Its function is as follows. Plays an essential role in the virus replication cycle by acting as a viroporin. Creates a pore in the host endoplasmic reticulum and as a consequence releases Ca2+ in the cytoplasm of infected cell. In turn, high levels of cytoplasmic calcium may trigger membrane trafficking and transport of viral ER-associated proteins to viroplasms, sites of viral genome replication. Induces and associates with structural rearrangements of intracellular membranes. Displays RNA-binding, nucleotide binding and NTPase activities. May play a role in virion morphogenesis and viral RNA encapsidation by interacting with the capsid protein VP3. Functionally, localizes the viral replication complex to the surface of membranous vesicles. Together with protein 3CD binds the Cis-Active RNA Element (CRE) which is involved in RNA synthesis initiation. Acts as a cofactor to stimulate the activity of 3D polymerase, maybe through a nucleid acid chaperone activity. In terms of biological role, localizes the viral replication complex to the surface of membranous vesicles. It inhibits host cell endoplasmic reticulum-to-Golgi apparatus transport and causes the disassembly of the Golgi complex, possibly through GBF1 interaction. This would result in depletion of MHC, trail receptors and IFN receptors at the host cell surface. Plays an essential role in viral RNA replication by recruiting ACBD3 and PI4KB at the viral replication sites, thereby allowing the formation of the rearranged membranous structures where viral replication takes place. Its function is as follows. Acts as a primer for viral RNA replication and remains covalently bound to viral genomic RNA. VPg is uridylylated prior to priming replication into VPg-pUpU. The oriI viral genomic sequence may act as a template for this. The VPg-pUpU is then used as primer on the genomic RNA poly(A) by the RNA-dependent RNA polymerase to replicate the viral genome. During genome replication, the VPg-RNA linkage is removed by the host TDP2, thereby accelerating replication. During the late stage of the replication cycle, host TDP2 is excluded from sites of viral RNA synthesis and encapsidation, allowing for the generation of progeny virions. Involved in the viral replication complex and viral polypeptide maturation. It exhibits protease activity with a specificity and catalytic efficiency that is different from protease 3C. Protein 3CD lacks polymerase activity. Protein 3CD binds to the 5'UTR of the viral genome. Functionally, replicates the viral genomic RNA on the surface of intracellular membranes. May form linear arrays of subunits that propagate along a strong head-to-tail interaction called interface-I. Covalently attaches UMP to a tyrosine of VPg, which is used to prime RNA synthesis. The positive stranded RNA genome is first replicated at virus induced membranous vesicles, creating a dsRNA genomic replication form. This dsRNA is then used as template to synthesize positive stranded RNA genomes. ss(+)RNA genomes are either translated, replicated or encapsidated. In terms of biological role, major viral protease that mediates proteolytic processing of the polyprotein. Cleaves host EIF5B, contributing to host translation shutoff. Also cleaves host PABPC1, contributing to host translation shutoff. Cleaves host NLRP1, triggers host N-glycine-mediated degradation of the autoinhibitory NLRP1 N-terminal fragment. The sequence is that of Genome polyprotein from Human rhinovirus A serotype 89 (strain 41467-Gallo) (HRV-89).